Consider the following 931-residue polypeptide: Protein translocase subunit SecA (931 aa).

ATP contacts are provided by residues Q87, G105–T109, and D523. Residues C915, C917, C926, and H927 each contribute to the Zn(2+) site.

Belongs to the SecA family. In terms of assembly, monomer and homodimer. Part of the essential Sec protein translocation apparatus which comprises SecA, SecYEG and auxiliary proteins SecDF-YajC and YidC. It depends on Zn(2+) as a cofactor.

It is found in the cell inner membrane. It localises to the cytoplasm. The catalysed reaction is ATP + H2O + cellular proteinSide 1 = ADP + phosphate + cellular proteinSide 2.. Part of the Sec protein translocase complex. Interacts with the SecYEG preprotein conducting channel. Has a central role in coupling the hydrolysis of ATP to the transfer of proteins into and across the cell membrane, serving both as a receptor for the preprotein-SecB complex and as an ATP-driven molecular motor driving the stepwise translocation of polypeptide chains across the membrane. The sequence is that of Protein translocase subunit SecA from Xanthobacter autotrophicus (strain ATCC BAA-1158 / Py2).